The following is a 404-amino-acid chain: MKPPFEQALGIIRQLKRHGYEAYFVGGAVRDLLIGRAIGDVDIATSALPEEVMRLFPKTIDVGSKHGTVVVVHEGTAYEVTTFRTDGDYEDHRRPESVTFVRSLEEDLKRRDFTMNAIAMDERGTIIDPFGGQEAIERRLICTVGAADERFREDALRMMRAVRFVSQLGFALSEDTKSAIVQNAPLMAHISVERMTMEMEKLLAGPFVAEALPLLADTGLFAYLPGLAAKVQLLRSAAAFRWPWLTKREERWALLCRALDVKDIRPFLRAWKLPNKVIDEAGAILAALDDVPRPEEWTNEQLFSAGLERALSVEAVRAALCGAPSEPHHEELRRRFAALPIKTKGELAVNGKDVIRWAGKPAGPWVKETLDAIWRAVVSSEVENEKERIYAWLMERNRTHEKNC.

ATP contacts are provided by G27 and R30. Positions 27 and 30 each coordinate CTP. The Mg(2+) site is built by D40 and D42. Residues R111, D154, R157, R160, and R163 each contribute to the ATP site. The CTP site is built by R111, D154, R157, R160, and R163.

Belongs to the tRNA nucleotidyltransferase/poly(A) polymerase family. Bacterial CCA-adding enzyme type 3 subfamily. In terms of assembly, homodimer. Mg(2+) serves as cofactor.

The catalysed reaction is a tRNA precursor + 2 CTP + ATP = a tRNA with a 3' CCA end + 3 diphosphate. It catalyses the reaction a tRNA with a 3' CCA end + 2 CTP + ATP = a tRNA with a 3' CCACCA end + 3 diphosphate. In terms of biological role, catalyzes the addition and repair of the essential 3'-terminal CCA sequence in tRNAs without using a nucleic acid template. Adds these three nucleotides in the order of C, C, and A to the tRNA nucleotide-73, using CTP and ATP as substrates and producing inorganic pyrophosphate. tRNA 3'-terminal CCA addition is required both for tRNA processing and repair. Also involved in tRNA surveillance by mediating tandem CCA addition to generate a CCACCA at the 3' terminus of unstable tRNAs. While stable tRNAs receive only 3'-terminal CCA, unstable tRNAs are marked with CCACCA and rapidly degraded. The sequence is that of CCA-adding enzyme from Geobacillus kaustophilus (strain HTA426).